A 451-amino-acid polypeptide reads, in one-letter code: UDP-N-acetylmuramoylalanine--D-glutamate ligase (451 aa).

Residue 119 to 125 (GSNGKTT) coordinates ATP.

Belongs to the MurCDEF family.

The protein localises to the cytoplasm. The enzyme catalyses UDP-N-acetyl-alpha-D-muramoyl-L-alanine + D-glutamate + ATP = UDP-N-acetyl-alpha-D-muramoyl-L-alanyl-D-glutamate + ADP + phosphate + H(+). It functions in the pathway cell wall biogenesis; peptidoglycan biosynthesis. In terms of biological role, cell wall formation. Catalyzes the addition of glutamate to the nucleotide precursor UDP-N-acetylmuramoyl-L-alanine (UMA). This chain is UDP-N-acetylmuramoylalanine--D-glutamate ligase, found in Streptococcus agalactiae serotype Ia (strain ATCC 27591 / A909 / CDC SS700).